A 122-amino-acid polypeptide reads, in one-letter code: Large ribosomal subunit protein bL12 (122 aa).

This sequence belongs to the bacterial ribosomal protein bL12 family. In terms of assembly, homodimer. Part of the ribosomal stalk of the 50S ribosomal subunit. Forms a multimeric L10(L12)X complex, where L10 forms an elongated spine to which 2 to 4 L12 dimers bind in a sequential fashion. Binds GTP-bound translation factors.

In terms of biological role, forms part of the ribosomal stalk which helps the ribosome interact with GTP-bound translation factors. Is thus essential for accurate translation. In Xylella fastidiosa (strain 9a5c), this protein is Large ribosomal subunit protein bL12.